Here is a 227-residue protein sequence, read N- to C-terminus: Cytochrome c oxidase subunit 2 (227 aa).

The Mitochondrial intermembrane portion of the chain corresponds to 1-14 (MAYPFQMGLQDATS). A helical transmembrane segment spans residues 15–45 (PIMEELLHFHDHTLMIVFLISSLVLYIISLM). At 46-59 (LTTKLTHTSTMDAQ) the chain is on the mitochondrial matrix side. A helical membrane pass occupies residues 60-87 (EVETIWTILPAIILILIALPSLRILYMM). Over 88 to 227 (DEINNPSLTV…HFEKWSASLL (140 aa)) the chain is Mitochondrial intermembrane. Residues histidine 161, cysteine 196, glutamate 198, cysteine 200, histidine 204, and methionine 207 each coordinate Cu cation. Mg(2+) is bound at residue glutamate 198.

The protein belongs to the cytochrome c oxidase subunit 2 family. In terms of assembly, component of the cytochrome c oxidase (complex IV, CIV), a multisubunit enzyme composed of 14 subunits. The complex is composed of a catalytic core of 3 subunits MT-CO1, MT-CO2 and MT-CO3, encoded in the mitochondrial DNA, and 11 supernumerary subunits COX4I, COX5A, COX5B, COX6A, COX6B, COX6C, COX7A, COX7B, COX7C, COX8 and NDUFA4, which are encoded in the nuclear genome. The complex exists as a monomer or a dimer and forms supercomplexes (SCs) in the inner mitochondrial membrane with NADH-ubiquinone oxidoreductase (complex I, CI) and ubiquinol-cytochrome c oxidoreductase (cytochrome b-c1 complex, complex III, CIII), resulting in different assemblies (supercomplex SCI(1)III(2)IV(1) and megacomplex MCI(2)III(2)IV(2)). Found in a complex with TMEM177, COA6, COX18, COX20, SCO1 and SCO2. Interacts with TMEM177 in a COX20-dependent manner. Interacts with COX20. Interacts with COX16. Cu cation serves as cofactor.

The protein localises to the mitochondrion inner membrane. It carries out the reaction 4 Fe(II)-[cytochrome c] + O2 + 8 H(+)(in) = 4 Fe(III)-[cytochrome c] + 2 H2O + 4 H(+)(out). In terms of biological role, component of the cytochrome c oxidase, the last enzyme in the mitochondrial electron transport chain which drives oxidative phosphorylation. The respiratory chain contains 3 multisubunit complexes succinate dehydrogenase (complex II, CII), ubiquinol-cytochrome c oxidoreductase (cytochrome b-c1 complex, complex III, CIII) and cytochrome c oxidase (complex IV, CIV), that cooperate to transfer electrons derived from NADH and succinate to molecular oxygen, creating an electrochemical gradient over the inner membrane that drives transmembrane transport and the ATP synthase. Cytochrome c oxidase is the component of the respiratory chain that catalyzes the reduction of oxygen to water. Electrons originating from reduced cytochrome c in the intermembrane space (IMS) are transferred via the dinuclear copper A center (CU(A)) of subunit 2 and heme A of subunit 1 to the active site in subunit 1, a binuclear center (BNC) formed by heme A3 and copper B (CU(B)). The BNC reduces molecular oxygen to 2 water molecules using 4 electrons from cytochrome c in the IMS and 4 protons from the mitochondrial matrix. The sequence is that of Cytochrome c oxidase subunit 2 (MT-CO2) from Ailurus fulgens (Himalayan red panda).